The following is a 117-amino-acid chain: Larval cuticle protein A2B (117 aa).

The stretch at 12–15 is repeat 1; sequence AAPV. The region spanning 29-95 is the Chitin-binding type R&amp;R domain; sequence HPQYQYGYDV…AVVHREPLVA (67 aa). Repeat 2 spans residues 108–111; the sequence is AAPV.

In terms of biological role, component of the cuticle of the larva of Tenebrio molitor. The polypeptide is Larval cuticle protein A2B (Tenebrio molitor (Yellow mealworm beetle)).